A 455-amino-acid polypeptide reads, in one-letter code: Probable xyloglucan galactosyltransferase GT17 (455 aa).

Residues 1-34 (MTFNKRQVKINHWPEKNDKEKQKYSKNRETVKLT) are Cytoplasmic-facing. A helical; Signal-anchor for type II membrane protein membrane pass occupies residues 35-55 (LLTLLLLCSICFLFLTLNFPF). Residues 56–455 (TIEFTASIPR…QARDNVVVSL (400 aa)) are Lumenal-facing. N-linked (GlcNAc...) asparagine glycosylation is found at Asn-70, Asn-169, Asn-230, Asn-390, and Asn-426.

It belongs to the glycosyltransferase 47 family. Expressed in roots and hypocotyls.

It is found in the golgi apparatus membrane. In terms of biological role, functions in xyloglucan synthesis by adding side chains to the xylosylated glucan backbone. Involved in the galactosylation of hemicellulose xyloglucan. The protein is Probable xyloglucan galactosyltransferase GT17 of Arabidopsis thaliana (Mouse-ear cress).